Consider the following 455-residue polypeptide: UPF0053 protein MT1890 (455 aa).

The CNNM transmembrane domain occupies 2–205 (NLTDTVATIL…ARSGALDDAT (204 aa)). Transmembrane regions (helical) follow at residues 6-26 (TVAT…FVAA), 68-88 (LGIS…VAEL), 106-126 (LITF…GELV), and 148-168 (LFSL…NWIV). 2 consecutive CBS domains span residues 224–285 (MTPR…AHTL) and 286–346 (LTTV…VRDE).

Belongs to the UPF0053 family.

Its subcellular location is the cell membrane. The sequence is that of UPF0053 protein MT1890 from Mycobacterium tuberculosis (strain CDC 1551 / Oshkosh).